A 387-amino-acid polypeptide reads, in one-letter code: Protein PHYTOCHROME KINASE SUBSTRATE 3 (387 aa).

Disordered regions lie at residues M1–L21, H74–Q128, and L242–A271. Positions Q12–L21 are enriched in polar residues. Over residues H74 to P83 the composition is skewed to basic and acidic residues. Residues H114–Q128 are compositionally biased toward polar residues. Residues L242–N261 are compositionally biased toward low complexity.

This sequence belongs to the PKS family.

In terms of biological role, probably involved in the phytochrome signaling pathway. The protein is Protein PHYTOCHROME KINASE SUBSTRATE 3 (PKS3) of Arabidopsis thaliana (Mouse-ear cress).